The sequence spans 343 residues: Polyprenyl transferase spyF (343 aa).

Helical transmembrane passes span 38 to 58 (WLAV…SHPL), 62 to 82 (VSVW…PASI), 92 to 112 (LLCL…NDWI), 138 to 158 (GFIW…STIL), 170 to 190 (LYIY…AIGW), 241 to 261 (AYVA…GLVL), 273 to 293 (SGWL…HQLL), and 311 to 331 (FALG…SSGM).

It belongs to the UbiA prenyltransferase family. Mg(2+) is required as a cofactor.

The protein resides in the membrane. The catalysed reaction is triacetate lactone + (2E,6E,10E)-geranylgeranyl diphosphate = (2E,6E,10E)-geranylgeranyl-triacetate lactone + diphosphate. Its pathway is secondary metabolite biosynthesis; terpenoid biosynthesis. Its function is as follows. Polyprenyl transferase; part of the gene cluster that mediates the biosynthesis of meroterpenoids called sartorypyrones. Within the pathway, spyF catalyzes the prenylation of triacetic acid lactone (TAL) to produce geranylgeranyl-triacetate lactone. The biosynthesis of sartorypyrones begins with the production of triacetic acid lactone (TAL) by the NR-PKS spyA using one molecule of acetyl-CoA and two molecules of malonyl-CoA. The prenyltransferase spyF then conjugates geranylgeranyl pyrophosphate (GGPP) to TAL to form geranylgeranyl-triacetate lactone, for which the pathway-specific geranylgeranyl pyrophosphate synthase (GGPS) spyE is required to provide GGPP. Subsequently, geranylgeranyl-triacetate lactone is epoxidized at the terminal olein by the FAD-dependent monooxygenase spyC, followed by cyclization of the terpenoid component catalyzed by the terpene cyclase spyD to produce both the bicyclic sartorypyrone F and the monocyclic sartorypyrone D. Finally, the last step of the biosynthesis involves the acetylation of the meroterpenoids sartorypyrones D and F by the acetyltransferase SpyB to produce sartorypyrones A and G, respectively. The chain is Polyprenyl transferase spyF from Aspergillus fumigatus (strain ATCC MYA-4609 / CBS 101355 / FGSC A1100 / Af293) (Neosartorya fumigata).